A 92-amino-acid chain; its full sequence is Co-chaperonin GroES (92 aa).

This sequence belongs to the GroES chaperonin family. In terms of assembly, heptamer of 7 subunits arranged in a ring. Interacts with the chaperonin GroEL.

It localises to the cytoplasm. Its function is as follows. Together with the chaperonin GroEL, plays an essential role in assisting protein folding. The GroEL-GroES system forms a nano-cage that allows encapsulation of the non-native substrate proteins and provides a physical environment optimized to promote and accelerate protein folding. GroES binds to the apical surface of the GroEL ring, thereby capping the opening of the GroEL channel. This Methanosarcina mazei (strain ATCC BAA-159 / DSM 3647 / Goe1 / Go1 / JCM 11833 / OCM 88) (Methanosarcina frisia) protein is Co-chaperonin GroES.